The chain runs to 416 residues: Calreticulin (416 aa).

The N-terminal stretch at 1–25 (MENRGRNPSFLSLLLLLSLFAIASA) is a signal peptide. The N-linked (GlcNAc...) asparagine glycan is linked to N57. Residues C111 and C143 are joined by a disulfide bond. An alpha-D-glucoside-binding residues include Y115, K117, Y134, and D141. A glycan (N-linked (GlcNAc...) asparagine) is linked at N157. Tandem repeats lie at residues 197–208 (KQTGSLYTDWDL), 216–227 (DPEAKKPEDWDD), 233–244 (DPEDKKPEGYDD), 251–262 (DPEAKKPEDWDD), 266–276 (GEWTAPTIPNP), 280–290 (GPWKAKKIKNP), and 294–304 (GKWKAPMIDNP). Residues 197–262 (KQTGSLYTDW…EAKKPEDWDD (66 aa)) form a 4 X approximate repeats region. Over residues 217–241 (PEAKKPEDWDDKEFIPDPEDKKPEG) the composition is skewed to basic and acidic residues. The disordered stretch occupies residues 217–281 (PEAKKPEDWD…TIPNPEYKGP (65 aa)). Residues 266–304 (GEWTAPTIPNPEYKGPWKAKKIKNPNYKGKWKAPMIDNP) form a 3 X approximate repeats region. An an alpha-D-glucoside-binding site is contributed by E324. The segment covering 351-381 (EETWGKQKDAEKAAFEELEKKREEEETKDDP) has biased composition (basic and acidic residues). A disordered region spans residues 351–416 (EETWGKQKDA…DKDDDQHDEL (66 aa)). Over residues 382–400 (VESDAEDEDEAEADDSDKD) the composition is skewed to acidic residues. Residues 401–416 (DADKSDDKDDDQHDEL) are compositionally biased toward basic and acidic residues. Positions 413 to 416 (HDEL) match the Prevents secretion from ER motif.

It belongs to the calreticulin family.

It localises to the endoplasmic reticulum lumen. Its function is as follows. Molecular calcium-binding chaperone promoting folding, oligomeric assembly and quality control in the ER via the calreticulin/calnexin cycle. This lectin may interact transiently with almost all of the monoglucosylated glycoproteins that are synthesized in the ER. This Beta vulgaris (Sugar beet) protein is Calreticulin.